A 192-amino-acid polypeptide reads, in one-letter code: Probable apo-citrate lyase phosphoribosyl-dephospho-CoA transferase (192 aa).

This sequence belongs to the CitX family.

It carries out the reaction apo-[citrate lyase ACP] + 2'-(5''-triphospho-alpha-D-ribosyl)-3'-dephospho-CoA = holo-[citrate lyase ACP] + diphosphate. In terms of biological role, transfers 2-(5''-triphosphoribosyl)-3'-dephosphocoenzyme-A on a serine residue to the apo-acyl carrier protein (gamma chain) of the citrate lyase to yield holo-acyl carrier protein. This is Probable apo-citrate lyase phosphoribosyl-dephospho-CoA transferase from Streptococcus pyogenes serotype M18 (strain MGAS8232).